A 100-amino-acid chain; its full sequence is Small ribosomal subunit protein uS14c (100 aa).

Belongs to the universal ribosomal protein uS14 family. Part of the 30S ribosomal subunit.

It localises to the plastid. Its subcellular location is the chloroplast. Its function is as follows. Binds 16S rRNA, required for the assembly of 30S particles. This Chaetosphaeridium globosum (Charophycean green alga) protein is Small ribosomal subunit protein uS14c.